Here is a 249-residue protein sequence, read N- to C-terminus: Probable cobalt-factor III C(17)-methyltransferase (249 aa).

Belongs to the precorrin methyltransferase family.

It catalyses the reaction Co(II)-factor III + S-adenosyl-L-methionine + H(+) = Co(II)-factor IV + S-adenosyl-L-homocysteine. It participates in cofactor biosynthesis; adenosylcobalamin biosynthesis; cob(II)yrinate a,c-diamide from sirohydrochlorin (anaerobic route): step 3/10. Functionally, methyltransferase that likely catalyzes the ring contraction and methylation of C-17 in cobalt-factor III to form cobalt-factor IV. May also convert cobalt-precorrin-3 to cobalt-precorrin-4. The protein is Probable cobalt-factor III C(17)-methyltransferase (cbiH) of Methanocaldococcus jannaschii (strain ATCC 43067 / DSM 2661 / JAL-1 / JCM 10045 / NBRC 100440) (Methanococcus jannaschii).